A 252-amino-acid polypeptide reads, in one-letter code: Thiamine thiazole synthase (252 aa).

NAD(+) is bound by residues Ser35, 54–55 (EK), Gly62, Val126, and 152–154 (HVD). Residues Asp154 and His169 each coordinate Fe cation. Met217 provides a ligand contact to NAD(+). Residue Arg227 participates in glycine binding.

Belongs to the THI4 family. As to quaternary structure, homooctamer; tetramer of dimers. Fe(2+) is required as a cofactor.

It carries out the reaction hydrogen sulfide + glycine + NAD(+) = ADP-5-ethyl-4-methylthiazole-2-carboxylate + nicotinamide + 3 H2O + H(+). It participates in cofactor biosynthesis; thiamine diphosphate biosynthesis. Its function is as follows. Involved in the biosynthesis of the thiazole moiety of thiamine. Catalyzes the conversion of NAD and glycine to adenosine diphosphate 5-(2-hydroxyethyl)-4-methylthiazole-2-carboxylate (ADT), an adenylated thiazole intermediate, using free sulfide as a source of sulfur. This is Thiamine thiazole synthase from Pyrococcus abyssi (strain GE5 / Orsay).